Here is a 1025-residue protein sequence, read N- to C-terminus: Synapsin (1025 aa).

Disordered stretches follow at residues 1-94 (MKRG…SRES), 439-784 (VCRP…NYGS), 872-910 (YDSNSIASQGEGLNNPSDLPSYTRPSYSRSESNASKHSD), and 995-1025 (DFSDSGSMSSIGSHTKRWSASKEEDDELDLK). Over residues 34–52 (TKPPVAGGPPNMPPPPAPG) the composition is skewed to pro residues. A compositionally biased stretch (low complexity) spans 454 to 463 (SRSSVSSRAE). A compositionally biased stretch (pro residues) spans 472–492 (PTPPLPAGPRPAPMGGPPPIP). Low complexity-rich tracts occupy residues 499-546 (VGSI…SSVS) and 594-626 (SETSSGSGPGSVPSSAGPGSGFSSSFLGKQFSF). S539 bears the Phosphoserine mark. Polar residues predominate over residues 651–673 (TTASSAVRPESSVSVSDSRNTDT). Residues 690-702 (QQERVNPFDKEPS) are compositionally biased toward basic and acidic residues. Residues 703–725 (KSGSAASIHTSSSSSISSSSISS) show a composition bias toward low complexity. Polar residues predominate over residues 726–735 (RINRNGNAIQ). Pro residues predominate over residues 736–749 (SPPPPAGPPPPPPT). Residues 750 to 759 (NVTAVGSNAN) are compositionally biased toward polar residues. Positions 760–772 (SSSGYRNSFSSSL) are enriched in low complexity. Positions 872-904 (YDSNSIASQGEGLNNPSDLPSYTRPSYSRSESN) are enriched in polar residues. Over residues 995–1007 (DFSDSGSMSSIGS) the composition is skewed to low complexity.

Belongs to the synapsin family. Identified in a complex with Syt1 and nwk. Widely expressed in the embryonic and adult nervous system synaptic terminals.

It localises to the synapse. Plays a significant role in nervous system function, which is subtle at the cellular level but manifests itself in complex behavior. In Drosophila melanogaster (Fruit fly), this protein is Synapsin (Syn).